A 141-amino-acid polypeptide reads, in one-letter code: Nucleoside diphosphate kinase (141 aa).

ATP is bound by residues lysine 11, phenylalanine 59, arginine 87, threonine 93, arginine 104, and asparagine 114. The active-site Pros-phosphohistidine intermediate is the histidine 117.

This sequence belongs to the NDK family. As to quaternary structure, homotetramer. Mg(2+) serves as cofactor.

It localises to the cytoplasm. The catalysed reaction is a 2'-deoxyribonucleoside 5'-diphosphate + ATP = a 2'-deoxyribonucleoside 5'-triphosphate + ADP. The enzyme catalyses a ribonucleoside 5'-diphosphate + ATP = a ribonucleoside 5'-triphosphate + ADP. Functionally, major role in the synthesis of nucleoside triphosphates other than ATP. The ATP gamma phosphate is transferred to the NDP beta phosphate via a ping-pong mechanism, using a phosphorylated active-site intermediate. In Histophilus somni (strain 129Pt) (Haemophilus somnus), this protein is Nucleoside diphosphate kinase.